A 124-amino-acid polypeptide reads, in one-letter code: Peptidyl-tRNA hydrolase (124 aa).

This sequence belongs to the PTH2 family.

The protein localises to the cytoplasm. The catalysed reaction is an N-acyl-L-alpha-aminoacyl-tRNA + H2O = an N-acyl-L-amino acid + a tRNA + H(+). Its function is as follows. The natural substrate for this enzyme may be peptidyl-tRNAs which drop off the ribosome during protein synthesis. The sequence is that of Peptidyl-tRNA hydrolase from Aeropyrum pernix (strain ATCC 700893 / DSM 11879 / JCM 9820 / NBRC 100138 / K1).